Here is a 386-residue protein sequence, read N- to C-terminus: Uroporphyrinogen decarboxylase (386 aa).

Residues R44, A46, R48, R57, D93, Y170, S225, and H364 each coordinate coproporphyrinogen I. R44, A46, and R48 together coordinate coproporphyrinogen III. Coproporphyrinogen III-binding residues include D93, Y170, S225, and H364.

The protein belongs to the uroporphyrinogen decarboxylase family. In terms of assembly, homodimer.

It is found in the cytoplasm. It localises to the cytosol. The catalysed reaction is uroporphyrinogen III + 4 H(+) = coproporphyrinogen III + 4 CO2. It functions in the pathway porphyrin-containing compound metabolism; protoporphyrin-IX biosynthesis; coproporphyrinogen-III from 5-aminolevulinate: step 4/4. Catalyzes the decarboxylation of four acetate groups of uroporphyrinogen-III to yield coproporphyrinogen-III. This Drosophila virilis (Fruit fly) protein is Uroporphyrinogen decarboxylase.